The following is a 660-amino-acid chain: Bifunctional polymyxin resistance protein ArnA (660 aa).

Positions 1–304 (MKTVVFAYHD…MLGLVQGSRL (304 aa)) are formyltransferase ArnAFT. Position 86–88 (86–88 (HLI)) interacts with (6R)-10-formyltetrahydrofolate. The active-site Proton donor; for formyltransferase activity is the H104. Residues R114 and 136–140 (VKRAD) contribute to the (6R)-10-formyltetrahydrofolate site. The dehydrogenase ArnADH stretch occupies residues 314 to 660 (RRTRVLILGV…RTVDLTDKPS (347 aa)). NAD(+)-binding positions include D347 and 368 to 369 (DI). Residues A393, Y398, and 432–433 (TS) each bind UDP-alpha-D-glucuronate. E434 functions as the Proton acceptor; for decarboxylase activity in the catalytic mechanism. UDP-alpha-D-glucuronate is bound by residues R460, N492, 526–535 (KLIDGGKQKR), and Y613. Residue R619 is the Proton donor; for decarboxylase activity of the active site.

This sequence in the N-terminal section; belongs to the Fmt family. UDP-L-Ara4N formyltransferase subfamily. In the C-terminal section; belongs to the NAD(P)-dependent epimerase/dehydratase family. UDP-glucuronic acid decarboxylase subfamily. Homohexamer, formed by a dimer of trimers.

It catalyses the reaction UDP-alpha-D-glucuronate + NAD(+) = UDP-beta-L-threo-pentopyranos-4-ulose + CO2 + NADH. The enzyme catalyses UDP-4-amino-4-deoxy-beta-L-arabinose + (6R)-10-formyltetrahydrofolate = UDP-4-deoxy-4-formamido-beta-L-arabinose + (6S)-5,6,7,8-tetrahydrofolate + H(+). Its pathway is nucleotide-sugar biosynthesis; UDP-4-deoxy-4-formamido-beta-L-arabinose biosynthesis; UDP-4-deoxy-4-formamido-beta-L-arabinose from UDP-alpha-D-glucuronate: step 1/3. The protein operates within nucleotide-sugar biosynthesis; UDP-4-deoxy-4-formamido-beta-L-arabinose biosynthesis; UDP-4-deoxy-4-formamido-beta-L-arabinose from UDP-alpha-D-glucuronate: step 3/3. It participates in bacterial outer membrane biogenesis; lipopolysaccharide biosynthesis. In terms of biological role, bifunctional enzyme that catalyzes the oxidative decarboxylation of UDP-glucuronic acid (UDP-GlcUA) to UDP-4-keto-arabinose (UDP-Ara4O) and the addition of a formyl group to UDP-4-amino-4-deoxy-L-arabinose (UDP-L-Ara4N) to form UDP-L-4-formamido-arabinose (UDP-L-Ara4FN). The modified arabinose is attached to lipid A and is required for resistance to polymyxin and cationic antimicrobial peptides. The protein is Bifunctional polymyxin resistance protein ArnA of Shigella flexneri.